A 370-amino-acid chain; its full sequence is 3-isopropylmalate dehydrogenase (370 aa).

77-90 (GPKWDSVPYEVRPE) provides a ligand contact to NAD(+). Positions 97, 107, 135, and 226 each coordinate substrate. Aspartate 226, aspartate 250, and aspartate 254 together coordinate Mg(2+). 290 to 302 (GSAPDIAGKGIAN) contacts NAD(+).

It belongs to the isocitrate and isopropylmalate dehydrogenases family. LeuB type 1 subfamily. Homodimer. Mg(2+) is required as a cofactor. The cofactor is Mn(2+).

The protein localises to the cytoplasm. It carries out the reaction (2R,3S)-3-isopropylmalate + NAD(+) = 4-methyl-2-oxopentanoate + CO2 + NADH. The protein operates within amino-acid biosynthesis; L-leucine biosynthesis; L-leucine from 3-methyl-2-oxobutanoate: step 3/4. Its function is as follows. Catalyzes the oxidation of 3-carboxy-2-hydroxy-4-methylpentanoate (3-isopropylmalate) to 3-carboxy-4-methyl-2-oxopentanoate. The product decarboxylates to 4-methyl-2 oxopentanoate. This is 3-isopropylmalate dehydrogenase from Brucella suis biovar 1 (strain 1330).